The following is a 309-amino-acid chain: MQLQFLGTGAGQPSKARNVSSLVLKLLEEINEVWMFDCGEGTQHQILETTIKPRKISKIFITHLHGDHIFGLPGFLSSRSFQANEEQTDIEIYGPKGIKNFVMSSLRVSGSRLPYRIDFHEFDENSLGKILETDKFTVYADKLDHTIFCVGYRIMQKDLEGTLDADKLRAAGVPFGPLFGKVKNGQDIVLEGGTKIIAADYISAPRPGKTITILGDTRKTDSSVRLAVAADVLVHEATYGKGDEKMARKHGHSTNMQAAEVAKEAGVKQLLLNHVSARFLSKDISVMRQDASTVFENVHVVKDLEEVEI.

H63, H65, D67, H68, H145, D216, and H274 together coordinate Zn(2+). The Proton acceptor role is filled by D67.

This sequence belongs to the RNase Z family. As to quaternary structure, homodimer. Zn(2+) serves as cofactor.

The catalysed reaction is Endonucleolytic cleavage of RNA, removing extra 3' nucleotides from tRNA precursor, generating 3' termini of tRNAs. A 3'-hydroxy group is left at the tRNA terminus and a 5'-phosphoryl group is left at the trailer molecule.. Its function is as follows. Zinc phosphodiesterase, which displays some tRNA 3'-processing endonuclease activity. Probably involved in tRNA maturation, by removing a 3'-trailer from precursor tRNA. This chain is Ribonuclease Z, found in Streptococcus gordonii (strain Challis / ATCC 35105 / BCRC 15272 / CH1 / DL1 / V288).